Reading from the N-terminus, the 372-residue chain is uncharacterized protein (372 aa).

Residues 1–24 form the signal peptide; it reads MSYYQIIVCILASISYIILLEVIA. Positions 92-215 constitute a PA domain; it reads PNRNDTDASY…SSYNLLWSDL (124 aa). A helical membrane pass occupies residues 236 to 256; it reads FWPFLLCFSPSIIMLITVQAL. S280 bears the Phosphoserine mark. The segment at 321–363 adopts an RING-type; atypical zinc-finger fold; that stretch reads CVICLESFTKGDKVVALPCKHEFHRPCIAKWIVDYRHACPTCN.

The protein localises to the golgi apparatus membrane. The protein resides in the vacuole membrane. This is an uncharacterized protein from Schizosaccharomyces pombe (strain 972 / ATCC 24843) (Fission yeast).